The sequence spans 504 residues: Catalase (504 aa).

Residues His-56 and Asn-129 contribute to the active site. A heme-binding site is contributed by Tyr-339.

It belongs to the catalase family. As to quaternary structure, homodimer. It depends on heme as a cofactor.

The catalysed reaction is 2 H2O2 = O2 + 2 H2O. Decomposes hydrogen peroxide into water and oxygen; serves to protect cells from the toxic effects of hydrogen peroxide. The protein is Catalase (katA) of Staphylococcus epidermidis.